Here is a 174-residue protein sequence, read N- to C-terminus: uncharacterized protein (174 aa).

This sequence belongs to the gamma-class carbonic anhydrase family.

This is an uncharacterized protein from Pseudomonas aeruginosa (strain ATCC 15692 / DSM 22644 / CIP 104116 / JCM 14847 / LMG 12228 / 1C / PRS 101 / PAO1).